The chain runs to 180 residues: ATP-dependent protease subunit HslV (180 aa).

Thr7 is an active-site residue. Na(+)-binding residues include Ala165, Cys168, and Thr171.

This sequence belongs to the peptidase T1B family. HslV subfamily. As to quaternary structure, a double ring-shaped homohexamer of HslV is capped on each side by a ring-shaped HslU homohexamer. The assembly of the HslU/HslV complex is dependent on binding of ATP.

The protein resides in the cytoplasm. The catalysed reaction is ATP-dependent cleavage of peptide bonds with broad specificity.. Allosterically activated by HslU binding. In terms of biological role, protease subunit of a proteasome-like degradation complex believed to be a general protein degrading machinery. This chain is ATP-dependent protease subunit HslV, found in Geobacillus kaustophilus (strain HTA426).